A 523-amino-acid chain; its full sequence is Tyrosine-protein kinase transforming protein Src (523 aa).

A disordered region spans residues 1–50; that stretch reads MGSSKSKPKDPSQRRRSLEPPDSTHHGGFPASQTPNKTAAPDTHRTPSRS. Glycine 2 carries N-myristoyl glycine; by host lipidation. The segment covering 7 to 25 has biased composition (basic and acidic residues); sequence KPKDPSQRRRSLEPPDSTH. The region spanning 71–139 is the SH3 domain; it reads TSPQRAGALA…PSNYVAPSDS (69 aa). The region spanning 145 to 242 is the SH2 domain; it reads WYFGKITRRE…GLCHRLTNVC (98 aa). The region spanning 264 to 514 is the Protein kinase domain; it reads LRLEVKLGQG…TFEYLQAQLL (251 aa). ATP is bound by residues 270–278 and lysine 292; that span reads LGQGYFGEV. The active-site Proton acceptor is the aspartate 383. Tyrosine 413 bears the Phosphotyrosine; by autocatalysis mark.

The protein belongs to the protein kinase superfamily. Tyr protein kinase family. SRC subfamily. As to quaternary structure, homodimer. Post-translationally, the phosphorylated form is termed pp60v-src.

The catalysed reaction is L-tyrosyl-[protein] + ATP = O-phospho-L-tyrosyl-[protein] + ADP + H(+). Its function is as follows. This phosphoprotein, required for both the initiation and the maintenance of neoplastic transformation, is a protein kinase that catalyzes the phosphorylation of tyrosine residues in vitro. The chain is Tyrosine-protein kinase transforming protein Src (V-SRC) from Gallus gallus (Chicken).